The sequence spans 304 residues: Ribonuclease Z (304 aa).

His63, His65, Asp67, His68, His143, Asp213, and His271 together coordinate Zn(2+). The active-site Proton acceptor is the Asp67.

The protein belongs to the RNase Z family. As to quaternary structure, homodimer. The cofactor is Zn(2+).

It catalyses the reaction Endonucleolytic cleavage of RNA, removing extra 3' nucleotides from tRNA precursor, generating 3' termini of tRNAs. A 3'-hydroxy group is left at the tRNA terminus and a 5'-phosphoryl group is left at the trailer molecule.. Zinc phosphodiesterase, which displays some tRNA 3'-processing endonuclease activity. Probably involved in tRNA maturation, by removing a 3'-trailer from precursor tRNA. This is Ribonuclease Z from Porphyromonas gingivalis (strain ATCC BAA-308 / W83).